The primary structure comprises 597 residues: Centrosomal protein of 70 kDa (597 aa).

The segment at 1-24 is disordered; sequence MFPVAPKPQDSNQPSDRLMTEKQQ. Coiled coils occupy residues 66-179 and 254-320; these read MRQN…QTEV and TYKG…QELI. The stretch at 483–516 is one TPR repeat; it reads NGVYPRMNEVYTRLGEMNNAVRNLQELLELDSSS.

As to quaternary structure, directly interacts with tubulin-gamma; this interaction determines centrosomal localization.

It is found in the cytoplasm. It localises to the cytoskeleton. Its subcellular location is the microtubule organizing center. The protein resides in the centrosome. Functionally, plays a role in the organization of both preexisting and nascent microtubules in interphase cells. During mitosis, required for the organization and orientation of the mitotic spindle. This chain is Centrosomal protein of 70 kDa (CEP70), found in Macaca fascicularis (Crab-eating macaque).